Here is a 320-residue protein sequence, read N- to C-terminus: Cytochrome f (320 aa).

Residues 1 to 35 (MQTRNTFFWIKEQMTRSISVSIIVYVITQTSISNA) form the signal peptide. Heme contacts are provided by Tyr-36, Cys-56, Cys-59, and His-60. The helical transmembrane segment at 286-306 (VQGLLFFFASVILAQIFLVLK) threads the bilayer.

This sequence belongs to the cytochrome f family. The 4 large subunits of the cytochrome b6-f complex are cytochrome b6, subunit IV (17 kDa polypeptide, petD), cytochrome f and the Rieske protein, while the 4 small subunits are PetG, PetL, PetM and PetN. The complex functions as a dimer. It depends on heme as a cofactor.

The protein localises to the plastid. It localises to the chloroplast thylakoid membrane. Functionally, component of the cytochrome b6-f complex, which mediates electron transfer between photosystem II (PSII) and photosystem I (PSI), cyclic electron flow around PSI, and state transitions. This Buxus microphylla (Littleleaf boxwood) protein is Cytochrome f.